We begin with the raw amino-acid sequence, 315 residues long: Thioredoxin reductase (315 aa).

Residue 45–52 (EGSTPGGK) participates in FAD binding. A disulfide bridge connects residues C145 and C148. 288–297 (DCRSKHFRQI) lines the FAD pocket.

It belongs to the class-II pyridine nucleotide-disulfide oxidoreductase family. Homodimer. FAD serves as cofactor.

The protein resides in the cytoplasm. The catalysed reaction is [thioredoxin]-dithiol + NADP(+) = [thioredoxin]-disulfide + NADPH + H(+). This Mycoplasma pneumoniae (strain ATCC 29342 / M129 / Subtype 1) (Mycoplasmoides pneumoniae) protein is Thioredoxin reductase (trxB).